The sequence spans 310 residues: p-hydroxybenzoic acid efflux pump subunit AaeA (310 aa).

Residues Ala-12–Tyr-32 traverse the membrane as a helical segment.

The protein belongs to the membrane fusion protein (MFP) (TC 8.A.1) family.

It is found in the cell inner membrane. Forms an efflux pump with AaeB. In Citrobacter koseri (strain ATCC BAA-895 / CDC 4225-83 / SGSC4696), this protein is p-hydroxybenzoic acid efflux pump subunit AaeA.